Here is a 304-residue protein sequence, read N- to C-terminus: Neurexophilin-4 (304 aa).

The signal sequence occupies residues 1-23 (MRLLPEWLLLLFGPWLLRKVISG). The II stretch occupies residues 24 to 84 (QIVESGRPQY…GALARPGAAG (61 aa)). N-linked (GlcNAc...) asparagine glycosylation is found at Asn-72, Asn-133, Asn-143, and Asn-149. The segment at 85–163 (GPPVPRTKRK…IVPPSKRVEF (79 aa)) is III. The tract at residues 164–220 (GGVWLPGPAPHPLQSTLALEGVLPGLGPPLGMAGQGLGGNLGGALAGPLGGALGVPG) is IV (linker domain). The segment at 221–304 (AKESRAFNCH…NFQSEHPYFG (84 aa)) is v (Cys-rich).

It belongs to the neurexophilin family. In terms of processing, may be proteolytically processed in neuron-like cells. In terms of tissue distribution, brain and kidney.

The protein localises to the secreted. In terms of biological role, may be signaling molecules that resemble neuropeptides and that act by binding to alpha-neurexins and possibly other receptors. The protein is Neurexophilin-4 (Nxph4) of Rattus norvegicus (Rat).